A 529-amino-acid polypeptide reads, in one-letter code: UDP-glucuronosyltransferase 2B11 (529 aa).

The N-terminal stretch at 1–21 is a signal peptide; the sequence is MTLKWTSVLLLIHLSCYFSSG. Position 135 is an N6-succinyllysine (Lys135). Asn315 is a glycosylation site (N-linked (GlcNAc...) asparagine). Residues 493-513 form a helical membrane-spanning segment; the sequence is VIGFLLACVATVIFIITKFCL.

Belongs to the UDP-glycosyltransferase family. In terms of tissue distribution, widely expressed.

It is found in the microsome membrane. Its subcellular location is the endoplasmic reticulum membrane. It catalyses the reaction glucuronate acceptor + UDP-alpha-D-glucuronate = acceptor beta-D-glucuronoside + UDP + H(+). UDPGT is of major importance in the conjugation and subsequent elimination of potentially toxic xenobiotics and endogenous compounds. The protein is UDP-glucuronosyltransferase 2B11 (UGT2B11) of Homo sapiens (Human).